A 150-amino-acid polypeptide reads, in one-letter code: D-aminoacyl-tRNA deacylase (150 aa).

Positions 138–139 match the Gly-cisPro motif, important for rejection of L-amino acids motif; sequence GP.

The protein belongs to the DTD family. As to quaternary structure, homodimer.

It is found in the cytoplasm. It catalyses the reaction glycyl-tRNA(Ala) + H2O = tRNA(Ala) + glycine + H(+). The enzyme catalyses a D-aminoacyl-tRNA + H2O = a tRNA + a D-alpha-amino acid + H(+). Its function is as follows. An aminoacyl-tRNA editing enzyme that deacylates mischarged D-aminoacyl-tRNAs. Also deacylates mischarged glycyl-tRNA(Ala), protecting cells against glycine mischarging by AlaRS. Acts via tRNA-based rather than protein-based catalysis; rejects L-amino acids rather than detecting D-amino acids in the active site. By recycling D-aminoacyl-tRNA to D-amino acids and free tRNA molecules, this enzyme counteracts the toxicity associated with the formation of D-aminoacyl-tRNA entities in vivo and helps enforce protein L-homochirality. This Salinibacter ruber (strain DSM 13855 / M31) protein is D-aminoacyl-tRNA deacylase.